The sequence spans 322 residues: MADVLTELPGVGPSTAEKLIEAGYLDFMKIATSTIGELTDIEGISEKAAAKMIMAARDLCDLGFKSGVELLKQRQSVWRLSTGSKELDTVLAGGLESQSVTEFAGMYGSGKTQIMHQTCVNLQMAEKIFADLEGVVEEEMENPKAVYIDTEGTFRPERVVQMAEGAGIDGQTVLDNTFVARAYNSDMQMLFAEKIEDLIKGGNNIKLVIIDSLTSTFRNEFTGRGKLAERQQKLGRHMATLNKLADLYNCIVLVTNQVAAKPDAFFGVAEQAIGGHVVGHAATFRFFLRKSKGDKRVAKLYDSPHLPDSEAVFRITEKGIQD.

An ATP-binding site is contributed by 105–112 (GMYGSGKT).

The protein belongs to the eukaryotic RecA-like protein family.

In terms of biological role, involved in DNA repair and in homologous recombination. Binds and assemble on single-stranded DNA to form a nucleoprotein filament. Hydrolyzes ATP in a ssDNA-dependent manner and promotes DNA strand exchange between homologous DNA molecules. This Methanococcus maripaludis (strain C5 / ATCC BAA-1333) protein is DNA repair and recombination protein RadA.